The sequence spans 404 residues: Putative nitronate monooxygenase (404 aa).

41–43 serves as a coordination point for FMN; the sequence is PMA. The active-site Proton acceptor is H224. H224 lines the substrate pocket. FMN is bound by residues 270–272 and 293–294; these read AGG and GT.

Belongs to the nitronate monooxygenase family. NMO class I subfamily. Requires FMN as cofactor.

The protein resides in the cytoplasm. The enzyme catalyses ethylnitronate + O2 = chemical entity + acetaldehyde + nitrite + H(+). Its function is as follows. Catalyzes the oxidation of alkyl nitronates to produce the corresponding carbonyl compounds and nitrites. The sequence is that of Putative nitronate monooxygenase from Saccharomyces cerevisiae (strain ATCC 204508 / S288c) (Baker's yeast).